We begin with the raw amino-acid sequence, 257 residues long: 4-hydroxy-tetrahydrodipicolinate reductase (257 aa).

Residues 8–13, 90–92, and 114–117 each bind NAD(+); these read GSTGRV, ATT, and ATNM. The Proton donor/acceptor role is filled by His-146. His-147 provides a ligand contact to (S)-2,3,4,5-tetrahydrodipicolinate. Lys-150 serves as the catalytic Proton donor. 156–157 provides a ligand contact to (S)-2,3,4,5-tetrahydrodipicolinate; the sequence is GT.

Belongs to the DapB family.

It localises to the cytoplasm. The enzyme catalyses (S)-2,3,4,5-tetrahydrodipicolinate + NAD(+) + H2O = (2S,4S)-4-hydroxy-2,3,4,5-tetrahydrodipicolinate + NADH + H(+). It catalyses the reaction (S)-2,3,4,5-tetrahydrodipicolinate + NADP(+) + H2O = (2S,4S)-4-hydroxy-2,3,4,5-tetrahydrodipicolinate + NADPH + H(+). It functions in the pathway amino-acid biosynthesis; L-lysine biosynthesis via DAP pathway; (S)-tetrahydrodipicolinate from L-aspartate: step 4/4. Functionally, catalyzes the conversion of 4-hydroxy-tetrahydrodipicolinate (HTPA) to tetrahydrodipicolinate. This Aliarcobacter butzleri (strain RM4018) (Arcobacter butzleri) protein is 4-hydroxy-tetrahydrodipicolinate reductase.